The following is a 159-amino-acid chain: Ribonuclease H (159 aa).

One can recognise an RNase H type-1 domain in the interval 2 to 144; it reads SQDPVIIHTD…ADELATRGLQ (143 aa). Mg(2+) is bound by residues Asp-11, Glu-50, Asp-72, and Asp-136.

The protein belongs to the RNase H family. In terms of assembly, monomer. Requires Mg(2+) as cofactor.

The protein resides in the cytoplasm. It carries out the reaction Endonucleolytic cleavage to 5'-phosphomonoester.. In terms of biological role, endonuclease that specifically degrades the RNA of RNA-DNA hybrids. In Mycolicibacterium smegmatis (strain ATCC 700084 / mc(2)155) (Mycobacterium smegmatis), this protein is Ribonuclease H.